Reading from the N-terminus, the 459-residue chain is Glycosyl hydrolase family 109 protein (459 aa).

The segment at residues 1 to 45 (MAGDESRSNPFSRRTLLRTSAAAGAGLGVAGLSTGYGAAQPVRPA) is a signal peptide (tat-type signal). NAD(+)-binding positions include 70-71 (NR), aspartate 92, 141-144 (WEWH), 161-162 (EC), and asparagine 190. Residues tyrosine 219, arginine 238, 250–253 (YPTH), and tyrosine 332 each bind substrate. Tyrosine 250 lines the NAD(+) pocket. Positions 440–459 (DFTRGRWQTPHPGVDSPKPA) are disordered.

Belongs to the Gfo/Idh/MocA family. Glycosyl hydrolase 109 subfamily. It depends on NAD(+) as a cofactor. Predicted to be exported by the Tat system. The position of the signal peptide cleavage has not been experimentally proven.

Functionally, glycosidase. This chain is Glycosyl hydrolase family 109 protein, found in Saccharopolyspora erythraea (strain ATCC 11635 / DSM 40517 / JCM 4748 / NBRC 13426 / NCIMB 8594 / NRRL 2338).